The sequence spans 394 residues: NAD(P)H-quinone oxidoreductase subunit H (394 aa).

The protein belongs to the complex I 49 kDa subunit family. As to quaternary structure, NDH-1 can be composed of about 15 different subunits; different subcomplexes with different compositions have been identified which probably have different functions.

It is found in the cellular thylakoid membrane. The catalysed reaction is a plastoquinone + NADH + (n+1) H(+)(in) = a plastoquinol + NAD(+) + n H(+)(out). It catalyses the reaction a plastoquinone + NADPH + (n+1) H(+)(in) = a plastoquinol + NADP(+) + n H(+)(out). NDH-1 shuttles electrons from an unknown electron donor, via FMN and iron-sulfur (Fe-S) centers, to quinones in the respiratory and/or the photosynthetic chain. The immediate electron acceptor for the enzyme in this species is believed to be plastoquinone. Couples the redox reaction to proton translocation, and thus conserves the redox energy in a proton gradient. Cyanobacterial NDH-1 also plays a role in inorganic carbon-concentration. The protein is NAD(P)H-quinone oxidoreductase subunit H of Prochlorococcus marinus (strain MIT 9313).